The primary structure comprises 223 residues: Transcriptional regulator HMO1 (223 aa).

Disordered regions lie at residues 69 to 89 (IEAT…APKK) and 165 to 223 (DGSA…HGSP). A compositionally biased stretch (basic and acidic residues) spans 70–86 (EATESKKKRKQEKDPNA). The segment at residues 87–160 (PKKPLTMFFQ…IYNIEKKKYE (74 aa)) is a DNA-binding region (HMG box). The segment covering 204-223 (KKKKKTEKKEKKKKSGHGSP) has biased composition (basic residues).

Its subcellular location is the nucleus. Functionally, transcription factor that binds upstream of hexose and ergosterol metabolism, as well as cell cycle genes. Activates pseudohyphal growth. The chain is Transcriptional regulator HMO1 (HMO1) from Candida albicans (strain SC5314 / ATCC MYA-2876) (Yeast).